A 144-amino-acid polypeptide reads, in one-letter code: UPF0102 protein Veis_0630 (144 aa).

The tract at residues 11–31 (PPAAAPGPAPAPASAATASER) is disordered.

It belongs to the UPF0102 family.

The polypeptide is UPF0102 protein Veis_0630 (Verminephrobacter eiseniae (strain EF01-2)).